Reading from the N-terminus, the 72-residue chain is Putative membrane protein insertion efficiency factor (72 aa).

The protein belongs to the UPF0161 family.

The protein localises to the cell inner membrane. In terms of biological role, could be involved in insertion of integral membrane proteins into the membrane. The chain is Putative membrane protein insertion efficiency factor from Trichodesmium erythraeum (strain IMS101).